The sequence spans 294 residues: Decaprenyl-diphosphate synthase subunit 2 (294 aa).

Belongs to the FPP/GGPP synthase family. Heterotetramer of 2 dps1 and 2 dlp1 subunits.

It localises to the mitochondrion. The enzyme catalyses 7 isopentenyl diphosphate + (2E,6E)-farnesyl diphosphate = all-trans-decaprenyl diphosphate + 7 diphosphate. It participates in cofactor biosynthesis; ubiquinone biosynthesis. Functionally, supplies decaprenyl diphosphate, the precursor for the side chain of the isoprenoid quinones ubiquinone-10. The protein is Decaprenyl-diphosphate synthase subunit 2 (dlp1) of Schizosaccharomyces pombe (strain 972 / ATCC 24843) (Fission yeast).